The following is a 139-amino-acid chain: Putative nickel-responsive regulator (139 aa).

Residues histidine 79, histidine 90, histidine 92, and cysteine 98 each coordinate Ni(2+).

This sequence belongs to the transcriptional regulatory CopG/NikR family. Ni(2+) serves as cofactor.

Transcriptional regulator. The sequence is that of Putative nickel-responsive regulator from Pelobacter propionicus (strain DSM 2379 / NBRC 103807 / OttBd1).